A 131-amino-acid polypeptide reads, in one-letter code: Single-stranded DNA-binding protein 2 (131 aa).

One can recognise an SSB domain in the interval 1–103 (MYNKVIMIGR…VLASSFQLLE (103 aa)). Residues 126–131 (EEELPF) carry the Important for interaction with partner proteins motif.

As to quaternary structure, homotetramer.

Its function is as follows. Plays an important role in DNA replication, recombination and repair. Binds to ssDNA and to an array of partner proteins to recruit them to their sites of action during DNA metabolism. This chain is Single-stranded DNA-binding protein 2 (ssb2), found in Streptococcus agalactiae serotype III (strain NEM316).